Consider the following 466-residue polypeptide: ATP synthase subunit beta (466 aa).

156 to 163 (GGAGVGKT) provides a ligand contact to ATP.

This sequence belongs to the ATPase alpha/beta chains family. In terms of assembly, F-type ATPases have 2 components, CF(1) - the catalytic core - and CF(0) - the membrane proton channel. CF(1) has five subunits: alpha(3), beta(3), gamma(1), delta(1), epsilon(1). CF(0) has three main subunits: a(1), b(2) and c(9-12). The alpha and beta chains form an alternating ring which encloses part of the gamma chain. CF(1) is attached to CF(0) by a central stalk formed by the gamma and epsilon chains, while a peripheral stalk is formed by the delta and b chains.

The protein localises to the cell inner membrane. The catalysed reaction is ATP + H2O + 4 H(+)(in) = ADP + phosphate + 5 H(+)(out). Its function is as follows. Produces ATP from ADP in the presence of a proton gradient across the membrane. The catalytic sites are hosted primarily by the beta subunits. In Dechloromonas aromatica (strain RCB), this protein is ATP synthase subunit beta.